Reading from the N-terminus, the 257-residue chain is Ubiquinone biosynthesis O-methyltransferase (257 aa).

Positions 43, 77, 98, and 144 each coordinate S-adenosyl-L-methionine.

It belongs to the methyltransferase superfamily. UbiG/COQ3 family.

The enzyme catalyses a 3-demethylubiquinol + S-adenosyl-L-methionine = a ubiquinol + S-adenosyl-L-homocysteine + H(+). The catalysed reaction is a 3-(all-trans-polyprenyl)benzene-1,2-diol + S-adenosyl-L-methionine = a 2-methoxy-6-(all-trans-polyprenyl)phenol + S-adenosyl-L-homocysteine + H(+). Its pathway is cofactor biosynthesis; ubiquinone biosynthesis. O-methyltransferase that catalyzes the 2 O-methylation steps in the ubiquinone biosynthetic pathway. The sequence is that of Ubiquinone biosynthesis O-methyltransferase from Psychrobacter cryohalolentis (strain ATCC BAA-1226 / DSM 17306 / VKM B-2378 / K5).